A 276-amino-acid polypeptide reads, in one-letter code: Eukaryotic translation initiation factor 3 subunit G (276 aa).

The residue at position 148 (S148) is a Phosphoserine. One can recognise an RRM domain in the interval 195–274 (TTLKISQLNS…LILHLEWSKK (80 aa)).

The protein belongs to the eIF-3 subunit G family. As to quaternary structure, component of the eukaryotic translation initiation factor 3 (eIF-3) complex.

It localises to the cytoplasm. Functionally, RNA-binding component of the eukaryotic translation initiation factor 3 (eIF-3) complex, which is involved in protein synthesis of a specialized repertoire of mRNAs and, together with other initiation factors, stimulates binding of mRNA and methionyl-tRNAi to the 40S ribosome. The eIF-3 complex specifically targets and initiates translation of a subset of mRNAs involved in cell proliferation. This subunit can bind 18S rRNA. The chain is Eukaryotic translation initiation factor 3 subunit G from Debaryomyces hansenii (strain ATCC 36239 / CBS 767 / BCRC 21394 / JCM 1990 / NBRC 0083 / IGC 2968) (Yeast).